A 319-amino-acid polypeptide reads, in one-letter code: 1-aminocyclopropane-1-carboxylate oxidase 1 (319 aa).

Residues 153-253 form the Fe2OG dioxygenase domain; that stretch reads PNFGTKVSNY…RMSLASFYNP (101 aa). 3 residues coordinate Fe cation: histidine 177, aspartate 179, and histidine 234.

This sequence belongs to the iron/ascorbate-dependent oxidoreductase family. Fe cation serves as cofactor.

The catalysed reaction is 1-aminocyclopropane-1-carboxylate + L-ascorbate + O2 = ethene + L-dehydroascorbate + hydrogen cyanide + CO2 + 2 H2O. The protein operates within alkene biosynthesis; ethylene biosynthesis via S-adenosyl-L-methionine; ethylene from S-adenosyl-L-methionine: step 2/2. This Petunia hybrida (Petunia) protein is 1-aminocyclopropane-1-carboxylate oxidase 1 (ACO1).